We begin with the raw amino-acid sequence, 778 residues long: Arf-GAP with coiled-coil, ANK repeat and PH domain-containing protein 2 (778 aa).

The BAR domain maps to 1 to 226 (MKMTVDFEEC…MKDLGAQLDR (226 aa)). Positions 266 to 361 (GIVMEGYLFK…WIKAVQTSIA (96 aa)) constitute a PH domain. The interval 371-391 (SEKLDKKSSPSTGSLDSGNES) is disordered. Over residues 379–388 (SPSTGSLDSG) the composition is skewed to polar residues. Residues Ser384 and Ser387 each carry the phosphoserine modification. One can recognise an Arf-GAP domain in the interval 399–520 (ESALQRVQCI…KFVDKYSISL (122 aa)). The segment at 414 to 437 (CCDCGLADPRWASINLGITLCIEC) adopts a C4-type zinc-finger fold. Phosphoserine is present on Ser521. Positions 540-599 (SISKFGPGDQVRASAQSSVRSNDSGIQQSSDDGRESLPSTVSANSLYEPEGERQDSSMFL) are disordered. The span at 552–569 (ASAQSSVRSNDSGIQQSS) shows a compositional bias: polar residues. Phosphoserine occurs at positions 581 and 584. ANK repeat units lie at residues 640–669 (NKAT…NVNQ), 673–702 (QGRG…NQHA), and 706–735 (EGKD…NEEM). Tyr742 is modified (phosphotyrosine). Position 775 is a phosphoserine (Ser775).

As to quaternary structure, interacts (via KANK domains) with RAB35 (GTP-bound form); the interaction is direct and probably recruits ACAP2 to membranes including plasma membrane. Interacts with MICALL1; the interaction is indirect through RAB35. In terms of tissue distribution, widely expressed. Highest level in lung.

It localises to the cell membrane. It is found in the endosome membrane. GAP activity stimulated by phosphatidylinositol 4,5-bisphosphate (PIP2) and phosphatidic acid. GTPase-activating protein (GAP) for ADP ribosylation factor 6 (ARF6). Doesn't show GAP activity for RAB35. In Homo sapiens (Human), this protein is Arf-GAP with coiled-coil, ANK repeat and PH domain-containing protein 2 (ACAP2).